The chain runs to 67 residues: ATP synthase F(0) complex subunit 8 (67 aa).

Residues 8–24 form a helical membrane-spanning segment; sequence TWFITIISSMATLFILF. Lysine 54 bears the N6-acetyllysine; alternate mark. Lysine 54 is subject to N6-succinyllysine; alternate. Lysine 57 carries the N6-acetyllysine modification.

It belongs to the ATPase protein 8 family. In terms of assembly, component of the ATP synthase complex composed at least of ATP5F1A/subunit alpha, ATP5F1B/subunit beta, ATP5MC1/subunit c (homooctomer), MT-ATP6/subunit a, MT-ATP8/subunit 8, ATP5ME/subunit e, ATP5MF/subunit f, ATP5MG/subunit g, ATP5MK/subunit k, ATP5MJ/subunit j, ATP5F1C/subunit gamma, ATP5F1D/subunit delta, ATP5F1E/subunit epsilon, ATP5PF/subunit F6, ATP5PB/subunit b, ATP5PD/subunit d, ATP5PO/subunit OSCP. ATP synthase complex consists of a soluble F(1) head domain (subunits alpha(3) and beta(3)) - the catalytic core - and a membrane F(0) domain - the membrane proton channel (subunits c, a, 8, e, f, g, k and j). These two domains are linked by a central stalk (subunits gamma, delta, and epsilon) rotating inside the F1 region and a stationary peripheral stalk (subunits F6, b, d, and OSCP). Interacts with PRICKLE3.

The protein localises to the mitochondrion membrane. Functionally, subunit 8, of the mitochondrial membrane ATP synthase complex (F(1)F(0) ATP synthase or Complex V) that produces ATP from ADP in the presence of a proton gradient across the membrane which is generated by electron transport complexes of the respiratory chain. ATP synthase complex consist of a soluble F(1) head domain - the catalytic core - and a membrane F(1) domain - the membrane proton channel. These two domains are linked by a central stalk rotating inside the F(1) region and a stationary peripheral stalk. During catalysis, ATP synthesis in the catalytic domain of F(1) is coupled via a rotary mechanism of the central stalk subunits to proton translocation. In vivo, can only synthesize ATP although its ATP hydrolase activity can be activated artificially in vitro. Part of the complex F(0) domain. In Rattus norvegicus (Rat), this protein is ATP synthase F(0) complex subunit 8.